A 347-amino-acid chain; its full sequence is Quinolinate synthase (347 aa).

Iminosuccinate is bound by residues His47 and Ser68. Residue Cys113 coordinates [4Fe-4S] cluster. Iminosuccinate-binding positions include 139–141 (YAN) and Ser156. Cys200 is a binding site for [4Fe-4S] cluster. Residues 226–228 (HPE) and Thr243 contribute to the iminosuccinate site. Cys297 lines the [4Fe-4S] cluster pocket.

The protein belongs to the quinolinate synthase family. Type 1 subfamily. [4Fe-4S] cluster serves as cofactor.

The protein localises to the cytoplasm. It catalyses the reaction iminosuccinate + dihydroxyacetone phosphate = quinolinate + phosphate + 2 H2O + H(+). It functions in the pathway cofactor biosynthesis; NAD(+) biosynthesis; quinolinate from iminoaspartate: step 1/1. Catalyzes the condensation of iminoaspartate with dihydroxyacetone phosphate to form quinolinate. The sequence is that of Quinolinate synthase from Escherichia coli O139:H28 (strain E24377A / ETEC).